A 729-amino-acid chain; its full sequence is Capsid protein VP1 (729 aa).

Positions 1–10 are enriched in basic residues; that stretch reads MAPPAKRAKR. 3 disordered regions span residues 1-38, 96-115, and 130-185; these read MAPP…SDAA, LATD…KRTR, and KLTS…VGVS. Residues 4–13 carry the Nuclear localization signal motif; it reads PAKRAKRGWV. The phospholipase A2-like stretch occupies residues 19–64; sequence YLGPGNSLDQGEPTNPSDAAAKEHDEAYDQYIKSGKNPYLYFSAAD. Residues 25–35 are compositionally biased toward polar residues; that stretch reads SLDQGEPTNPS. A compositionally biased stretch (low complexity) spans 132 to 142; it reads TSSAAQQSSQT. Residues 143–152 are compositionally biased toward polar residues; sequence MSDGTSQPDS. Gly residues predominate over residues 168–184; the sequence is GPGGSGGGGSGGGGVGV. Residue asparagine 325 participates in Mg(2+) binding.

The protein belongs to the parvoviridae capsid protein family.

It is found in the virion. Its subcellular location is the host nucleus. In terms of biological role, capsid protein self-assembles to form an icosahedral capsid with a T=1 symmetry, about 22 nm in diameter, and consisting of 60 copies of two size variants of the capsid proteins, VP1 and VP2, which differ by the presence of an N-terminal extension in the minor protein VP1. The capsid encapsulates the genomic ssDNA. Capsid proteins are responsible for the attachment to host cell receptors. This attachment induces virion internalization predominantly through clathrin-dependent endocytosis. Binding to the host receptors also induces capsid rearrangements leading to surface exposure of VP1 N-terminus, specifically its phospholipase A2-like region and putative nuclear localization signal(s). VP1 N-terminus might serve as a lipolytic enzyme to breach the endosomal membrane during entry into host cell and might contribute to virus transport to the nucleus. The protein is Capsid protein VP1 of Mus musculus (Mouse).